The sequence spans 113 residues: UPF0212 protein MmarC6_1165 (113 aa).

The protein belongs to the UPF0212 family.

This chain is UPF0212 protein MmarC6_1165, found in Methanococcus maripaludis (strain C6 / ATCC BAA-1332).